The primary structure comprises 156 residues: MELTHIEDGKVRMVDVSHKDDVDRIAVAEGYIRLRSSTIEAIINKEVAKGNVIAAANIAGVMAVKKTPELIPMCHPIPITSVKFDFDIESVGIRVKCTVKSKGKTGVEMEALTGVSVALLTIWDMVKSLEKDERGNYPKTLIEVIRVVEKVKGGKE.

Substrate-binding positions include 73–75 (MCH) and 109–110 (ME). Aspartate 124 is a catalytic residue.

Belongs to the MoaC family. In terms of assembly, homohexamer; trimer of dimers.

The catalysed reaction is (8S)-3',8-cyclo-7,8-dihydroguanosine 5'-triphosphate = cyclic pyranopterin phosphate + diphosphate. It functions in the pathway cofactor biosynthesis; molybdopterin biosynthesis. Catalyzes the conversion of (8S)-3',8-cyclo-7,8-dihydroguanosine 5'-triphosphate to cyclic pyranopterin monophosphate (cPMP). The sequence is that of Probable cyclic pyranopterin monophosphate synthase from Archaeoglobus fulgidus (strain ATCC 49558 / DSM 4304 / JCM 9628 / NBRC 100126 / VC-16).